Here is a 239-residue protein sequence, read N- to C-terminus: 6-phosphogluconolactonase (239 aa).

The protein belongs to the glucosamine/galactosamine-6-phosphate isomerase family. 6-phosphogluconolactonase subfamily.

It carries out the reaction 6-phospho-D-glucono-1,5-lactone + H2O = 6-phospho-D-gluconate + H(+). It participates in carbohydrate degradation; pentose phosphate pathway; D-ribulose 5-phosphate from D-glucose 6-phosphate (oxidative stage): step 2/3. Hydrolysis of 6-phosphogluconolactone to 6-phosphogluconate. This is 6-phosphogluconolactonase (pgl) from Xylella fastidiosa (strain Temecula1 / ATCC 700964).